Consider the following 136-residue polypeptide: Neuropeptide CCHamide-2 (136 aa).

Residues 1–24 (MKSTISLLLVVICTVVLAAQQSQA) form the signal peptide. A disulfide bridge links Cys28 with Cys35. Residue His39 is modified to Histidine amide. A disordered region spans residues 42–78 (RSLSPGSGSGTGVGGGMGEAASGGQEPDYVRPNGLLP). Positions 43-136 (SLSPGSGSGT…ANSAELNGVN (94 aa)) are excised as a propeptide. Residues 48–59 (SGSGTGVGGGMG) are compositionally biased toward gly residues.

Expressed in endocrine cells of the larval midgut (at protein level). Also expressed in endocrine cells of the midgut of adult males and females (at protein level). In the midgut, expression occurs mainly in the anterior region (at protein level). In the larval central nervous system, expressed in about 40 neurons in the brain hemispheres and ventral nerve cord (at protein level). Highly expressed in larval and adult gut with low levels in larval and adult brain. Very little expression in the larval fat body. However, another study shows high levels of expression in the larval fat body as well as the larval gut with low levels in the larval central nervous system.

It localises to the secreted. Ligand for the CCHamide-2 receptor CCHa2-R. In one study, shown to be an orexigenic peptide which induces appetite and stimulates food intake, leading to the release of insulin-like peptides which stimulate growth. In another study, shown to be a nutrient-sensitive peptide derived from peripheral tissues which controls growth by directly regulating the production and release of insulin-like peptides. The protein is Neuropeptide CCHamide-2 of Drosophila melanogaster (Fruit fly).